The following is a 1105-amino-acid chain: Tubulin-folding cofactor D (1105 aa).

Residues asparagine 122 and asparagine 126 are each glycosylated (N-linked (GlcNAc...) asparagine). 4 HEAT repeats span residues 308 to 345 (IYLEVIVDFLLSSVSDIDSFVRWSAAKGLAKIISRLPW), 347 to 385 (LAEQVIDAIIELMTENMFLNPIENTVNISITSPLVWHGA), 401 to 446 (SKCL…CYSK), and 452 to 489 (LQTNLILCLLQTVLFDNEINVRRAATAALFEVIGRHAS). Residue asparagine 373 is glycosylated (N-linked (GlcNAc...) asparagine). 3 N-linked (GlcNAc...) asparagine glycosylation sites follow: asparagine 721, asparagine 883, and asparagine 1083.

In terms of assembly, interacts with alp21.

The protein localises to the cytoplasm. Its subcellular location is the cytoskeleton. Functionally, has a function in the folding of beta-tubulin. Microtubule-associated protein that is essential to direct polarized cell growth and to position the nucleus and septum to the center of the cell during mitosis. This Schizosaccharomyces pombe (strain 972 / ATCC 24843) (Fission yeast) protein is Tubulin-folding cofactor D (alp1).